Reading from the N-terminus, the 429-residue chain is MFYDTAKIYVKAGDGGNGCVSFRREKYVPNGGPDGGDGGRGGSVILVGDEGLNTLLDFRYKRHYKAPRGEHGKGSNRHGKAGENLYIRVPVGTVVKDEATGEILADITEHGQEVVVARGGRGGRGNAHFASPTHQAPKFAELGEPGEERWLLLELKLLADVGLVGYPNAGKSTLISRVSAARPKIADYPFTTLTPNLGVVEVGEGQSFVMADIPGLIEGAHAGVGLGHQFLRHVERTRVLLMVLDMSGFEGRDPVDDFEVLLKELKLYNEQLLTKPLVIAANKMDTANAQENLEKLKQHIAGKYEIYPISALTGEGLKPLIYRLWEIISTLPRESLEVKPQKVIKEQPEEGFVVEKVDGIFVVKGKKIERLVAMTNLDNEEAVDRLQRTFTRMGLEEQLKRAGVKPGDLVRIGKFEFYFVDETEGLEEE.

The region spanning 1–158 (MFYDTAKIYV…RWLLLELKLL (158 aa)) is the Obg domain. One can recognise an OBG-type G domain in the interval 159–329 (ADVGLVGYPN…LIYRLWEIIS (171 aa)). Residues 165–172 (GYPNAGKS), 190–194 (FTTLT), 212–215 (DIPG), 282–285 (NKMD), and 310–312 (SAL) contribute to the GTP site. Mg(2+)-binding residues include S172 and T192. An OCT domain is found at 344-421 (IKEQPEEGFV…IGKFEFYFVD (78 aa)).

It belongs to the TRAFAC class OBG-HflX-like GTPase superfamily. OBG GTPase family. Monomer. Requires Mg(2+) as cofactor.

It is found in the cytoplasm. Its function is as follows. An essential GTPase which binds GTP, GDP and possibly (p)ppGpp with moderate affinity, with high nucleotide exchange rates and a fairly low GTP hydrolysis rate. Plays a role in control of the cell cycle, stress response, ribosome biogenesis and in those bacteria that undergo differentiation, in morphogenesis control. This Carboxydothermus hydrogenoformans (strain ATCC BAA-161 / DSM 6008 / Z-2901) protein is GTPase Obg.